A 143-amino-acid polypeptide reads, in one-letter code: MDIQTILEKTLPGLGYELVDFELAAQGTLRVFIDKEGGITVEDCATVSNHLSRVFMVEDIGYKNLEISSPGLDRPLKKAADFVRFAGQNAKIKTRLPIGGQKNFIGKIEGCENDTVTVSFDGKTVQIELGNIDKARLRPEFKF.

Belongs to the RimP family.

The protein localises to the cytoplasm. In terms of biological role, required for maturation of 30S ribosomal subunits. The protein is Ribosome maturation factor RimP of Neisseria gonorrhoeae (strain ATCC 700825 / FA 1090).